Consider the following 396-residue polypeptide: Acetate kinase (396 aa).

Asparagine 8 serves as a coordination point for Mg(2+). Lysine 15 lines the ATP pocket. Arginine 89 is a substrate binding site. Residue aspartate 146 is the Proton donor/acceptor of the active site. ATP is bound by residues 206–210 (HLGNG), 280–282 (DMR), and 328–332 (GVGEN). Residue glutamate 382 participates in Mg(2+) binding.

This sequence belongs to the acetokinase family. Homodimer. The cofactor is Mg(2+). It depends on Mn(2+) as a cofactor.

Its subcellular location is the cytoplasm. The enzyme catalyses acetate + ATP = acetyl phosphate + ADP. Its pathway is metabolic intermediate biosynthesis; acetyl-CoA biosynthesis; acetyl-CoA from acetate: step 1/2. In terms of biological role, catalyzes the formation of acetyl phosphate from acetate and ATP. Can also catalyze the reverse reaction. The polypeptide is Acetate kinase (Clavibacter michiganensis subsp. michiganensis (strain NCPPB 382)).